The following is a 1176-amino-acid chain: Carbamoyl phosphate synthase arginine-specific large chain (1176 aa).

The N-terminal 11 residues, 1 to 11 (MLRSISIASRA), are a transit peptide targeting the mitochondrion. A carboxyphosphate synthetic domain region spans residues 70–465 (SRSPDVKKVL…SLQKAIRQVD (396 aa)). The ATP site is built by Arg197, Arg237, Gly243, Gly244, Lys273, Leu275, Glu280, Gly306, Thr307, His308, Gln348, and Glu362. An ATP-grasp 1 domain is found at 201-391 (VQALNEIDIP…LAYTAAKIAL (191 aa)). The Mg(2+) site is built by Gln348, Glu362, and Asn364. Mn(2+) is bound by residues Gln348, Glu362, and Asn364. The segment at 466-610 (PNFAGFEAYW…YTSYNATTHD (145 aa)) is oligomerization domain. Residues 611–997 (VKFDNGTMVL…AYWAALLSVN (387 aa)) are carbamoyl phosphate synthetic domain. One can recognise an ATP-grasp 2 domain in the interval 734 to 931 (SSILDSIGVD…FIDTASAAIM (198 aa)). ATP contacts are provided by Arg770, Gln809, Ile811, Glu816, Gly841, Val842, His843, Ser844, Gln884, and Glu902. Positions 884, 902, and 904 each coordinate Mg(2+). Mn(2+)-binding residues include Gln884, Glu902, and Asn904. The segment at 998-1137 (GMKLPKANSG…NPIPYSEGFK (140 aa)) is allosteric domain. The region spanning 999–1154 (MKLPKANSGI…RDFVGEAATT (156 aa)) is the MGS-like domain.

This sequence belongs to the CarB family. As to quaternary structure, heterodimer composed of 2 chains; the small (or glutamine) chain promotes the hydrolysis of glutamine to ammonia, which is used by the large (or ammonia) chain to synthesize carbamoyl phosphate. It depends on Mg(2+) as a cofactor. The cofactor is Mn(2+).

Its subcellular location is the mitochondrion. It catalyses the reaction hydrogencarbonate + L-glutamine + 2 ATP + H2O = carbamoyl phosphate + L-glutamate + 2 ADP + phosphate + 2 H(+). The enzyme catalyses hydrogencarbonate + NH4(+) + 2 ATP = carbamoyl phosphate + 2 ADP + phosphate + 2 H(+). It functions in the pathway amino-acid biosynthesis; L-arginine biosynthesis; carbamoyl phosphate from bicarbonate: step 1/1. Its function is as follows. Large subunit of the arginine-specific carbamoyl phosphate synthase (CPSase). CPSase catalyzes the formation of carbamoyl phosphate from the ammonia moiety of glutamine, hydrogencarbonate, and phosphate donated by ATP, constituting the first step of 2 biosynthetic pathways, one leading to arginine and/or urea and the other to pyrimidine nucleotides. The large subunit (synthetase) binds the substrates ammonia (free or transferred from glutamine from the small subunit), hydrogencarbonate and ATP and carries out an ATP-coupled ligase reaction, activating hydrogencarbonate by forming carboxy phosphate which reacts with ammonia to form carbamoyl phosphate. The sequence is that of Carbamoyl phosphate synthase arginine-specific large chain (argA) from Cutaneotrichosporon cutaneum (Yeast).